Here is a 261-residue protein sequence, read N- to C-terminus: V-type proton ATPase subunit D (261 aa).

Position 241 is a phosphoserine (serine 241).

The protein belongs to the V-ATPase D subunit family. As to quaternary structure, V-ATPase is a heteromultimeric enzyme composed of a peripheral catalytic V1 complex (components A to H) attached to an integral membrane V0 proton pore complex (components: a, c, c'', d and e).

Its subcellular location is the vacuole membrane. Functionally, subunit of the peripheral V1 complex of vacuolar ATPase. V-ATPase is responsible for acidifying a variety of intracellular compartments in eukaryotic cells, thus providing most of the energy required for transport processes in the vacuolar system. The chain is V-type proton ATPase subunit D (VHA-D) from Arabidopsis thaliana (Mouse-ear cress).